A 41-amino-acid chain; its full sequence is Photosystem I reaction center subunit IX (41 aa).

The chain crosses the membrane as a helical span at residues 7–27 (YLSTAPVIALAWMSFTAGLLI).

Belongs to the PsaJ family.

The protein resides in the plastid. The protein localises to the chloroplast thylakoid membrane. Functionally, may help in the organization of the PsaE and PsaF subunits. The polypeptide is Photosystem I reaction center subunit IX (Tupiella akineta (Green alga)).